A 309-amino-acid chain; its full sequence is Ornithine carbamoyltransferase (309 aa).

Carbamoyl phosphate-binding positions include 56 to 59, Gln83, Arg107, and 134 to 137; these read STRT and HPCQ. L-ornithine is bound by residues Asn165, Asp223, and 227 to 228; that span reads SM. Carbamoyl phosphate contacts are provided by residues 263–264 and Arg291; that span reads CL.

Belongs to the aspartate/ornithine carbamoyltransferase superfamily. OTCase family.

The protein localises to the cytoplasm. The enzyme catalyses carbamoyl phosphate + L-ornithine = L-citrulline + phosphate + H(+). Its pathway is amino-acid biosynthesis; L-arginine biosynthesis; L-arginine from L-ornithine and carbamoyl phosphate: step 1/3. Reversibly catalyzes the transfer of the carbamoyl group from carbamoyl phosphate (CP) to the N(epsilon) atom of ornithine (ORN) to produce L-citrulline. This is Ornithine carbamoyltransferase from Burkholderia cenocepacia (strain HI2424).